Reading from the N-terminus, the 161-residue chain is DNA-binding protein inhibitor ID-4 (161 aa).

In terms of domain architecture, bHLH spans 52-104; that stretch reads AAEAAADEPALCLQCDMNDCYSRLRRLVPTIPPNKKVSKVEILQHVIDYILDL. Over residues 117-126 the composition is skewed to pro residues; it reads QPPPPAPPHH. The interval 117-161 is disordered; it reads QPPPPAPPHHPAGTCPAAPPRTPLTALNTDPAGAVNKQGDSILCR.

Heterodimer with other HLH proteins.

The protein localises to the nucleus. Its function is as follows. Transcriptional regulator (lacking a basic DNA binding domain) which negatively regulates the basic helix-loop-helix (bHLH) transcription factors by forming heterodimers and inhibiting their DNA binding and transcriptional activity. Implicated in regulating a variety of cellular processes, including cellular growth, senescence, differentiation, apoptosis, angiogenesis, and neoplastic transformation. The chain is DNA-binding protein inhibitor ID-4 (ID4) from Homo sapiens (Human).